The primary structure comprises 279 residues: Histone chaperone ASF1 (279 aa).

The interaction with HIR1 stretch occupies residues 1 to 143 (MSIVSLLGIK…HIVRNILAEK (143 aa)). The interval 1-155 (MSIVSLLGIK…VTRFNIVWDN (155 aa)) is interaction with histone H3, histone H4, RAD53 and the RF-C complex. A disordered region spans residues 156–279 (ENEGDLYPPE…TPKDAARSTN (124 aa)). Residues 168–244 (GVDDEEEEDD…DEEEGEEEVG (77 aa)) are compositionally biased toward acidic residues. Residues 192–243 (DDQEDGEGEAEEAAEEEEEEEEKTEDNETNLEEEEEDIENSDGDEEEGEEEV) adopt a coiled-coil conformation. 2 stretches are compositionally biased toward basic and acidic residues: residues 245-254 (SVDKNEDGND) and 269-279 (STPKDAARSTN).

It belongs to the ASF1 family. In terms of assembly, interacts with histone H3/H4 heterodimers via both histone H3 and histone H4. Binds with higher affinity to H3/H4 heterodimers where histone H3 has been pre-acetylated on 'Lys-14'. Interacts with RAD53 and this may impair interaction with histones and chromatin assembly; the interaction is reduced upon activation of DNA damage or replication checkpoints which in turn promotes histone binding and chromatin assembly. Interacts with the CAC2 subunit of chromatin assembly factor 1 (CAF-1). Interacts with the HIR1, HIR2, HIR3 and HPC2 subunits of the HIR complex. Interacts with the RFC1, RFC2, RFC3, RFC4 and RFC5 subunits of the replication factor C (RF-C/RFC) complex; which may recruit this protein to DNA. Interacts with the SAS2, SAS4 and SAS5 subunits of the SAS/SAS-I complex. Interacts with the BDF1, BDF2, SPT15, TAF1 and TAF7 subunits of the TFIID complex. Interacts with RTT109 and VPS75; the interaction with RTT109 is direct.

The protein localises to the nucleus. Functionally, histone chaperone that facilitates histone deposition and histone exchange and removal during nucleosome assembly and disassembly. Facilitates histone deposition through both replication-dependent and replication-independent chromatin assembly pathways. Cooperates with chromatin assembly factor 1 (CAF-1) to promote replication-dependent chromatin assembly and with the HIR complex to promote replication-independent chromatin assembly, which may occur during transcription and DNA repair. May be required for the maintenance of a subset of replication elongation factors, including DNA polymerase epsilon, the RFC complex and PCNA, at stalled replication forks. Also required for RTT109-dependent acetylation of histone H3 on 'Lys-9' and 'Lys-56'. Promotion of RTT109-mediated histone H3 'Lys-56' acetylation is dependent on interactions with histone H3 pre-acetylated on 'Lys-14'. The sequence is that of Histone chaperone ASF1 from Saccharomyces cerevisiae (strain ATCC 204508 / S288c) (Baker's yeast).